Here is a 142-residue protein sequence, read N- to C-terminus: Large ribosomal subunit protein uL13 (142 aa).

The protein belongs to the universal ribosomal protein uL13 family. Part of the 50S ribosomal subunit.

This protein is one of the early assembly proteins of the 50S ribosomal subunit, although it is not seen to bind rRNA by itself. It is important during the early stages of 50S assembly. The protein is Large ribosomal subunit protein uL13 of Aeromonas salmonicida (strain A449).